The sequence spans 717 residues: MPDLLLELRSEEIPARMQRKAAGDLKKLVTDALVERGLTYEGAREYWTPRRLTLDIRGLNARSADVREEKKGPRTDANEKAIEGFLRGAGLNDISEAQVVSDPKKGDFYIAIINKPGRPAEEIIAEVMPGIIRSFPWPKSMRSGPASMPKGSSYAGIEGKGSESLRWVRPLQSIVCLFGPEHDETQVIPFVIDGIVAGNITYGHRFHAPGPITVRRFEDYVSNLEKAKVILDADRRKDIILHDAKDLAFANGLELVEDEGLLEEVSGLVEWPQVLMGTFEEDYLQIPAEIIRLTIKTNQKCFVTRNQGAEEGLSNRFILISNIEASDGGKEIIHGNGKVVRARLSDARHFWNRDQGDLPDLETLKDSAAKFDLDLKKPLDQRMAKLDALNVTFHAKLGTQGERVARIRELAKALAPVVGADGALVDRAVVLAKADLRTEAVGEFPELQGLMGRKYAVLQGENESVAAAIEDHYKPQGPSDRLPADKVAITVALADKLDTLVGFWAIDEKPTGSKDPFALRRAALGVVRILLEKNVRLPLLSVARDSDLLSFFHDRLKVYLRDLGARYDLIDAVLTPESDDLLMIARRVEALTAFITGEDGRNLLAGAKRATQLLAAEEKKGTVVADGVSEELLKLDAEKALYAAIKTASADAAKAVEGEDFRSAMQALSTLRAPVDKFFEDVLVNDEDAAIRANRLALLKAIREATGTVADFSKITG.

Belongs to the class-II aminoacyl-tRNA synthetase family. In terms of assembly, tetramer of two alpha and two beta subunits.

It is found in the cytoplasm. It catalyses the reaction tRNA(Gly) + glycine + ATP = glycyl-tRNA(Gly) + AMP + diphosphate. This Agrobacterium fabrum (strain C58 / ATCC 33970) (Agrobacterium tumefaciens (strain C58)) protein is Glycine--tRNA ligase beta subunit.